Consider the following 194-residue polypeptide: Histone H1 (194 aa).

N-acetylalanine; partial is present on A1. Over residues 1–14 (AEVAPAPAAAAPAK) the composition is skewed to low complexity. Disordered regions lie at residues 1-31 (AEVA…GPAV) and 105-194 (AKKP…AAKK). Basic residues predominate over residues 15 to 26 (APKKKAAAKPKK). Residues 27 to 100 (SGPAVGELAG…GASGSFKLNK (74 aa)) form the H15 domain. The segment covering 116–194 (KAKKVAAKKP…KVKKPAAAKK (79 aa)) has biased composition (basic residues). Residues S145, S161, and S182 each carry the phosphoserine modification.

This sequence belongs to the histone H1/H5 family.

It localises to the nucleus. It is found in the chromosome. Its function is as follows. Histones H1 are necessary for the condensation of nucleosome chains into higher-order structures. The sequence is that of Histone H1 from Salmo trutta (Brown trout).